Here is a 320-residue protein sequence, read N- to C-terminus: Polycomb complex protein BMI-1-A (320 aa).

Residues 18-57 form an RING-type zinc finger; it reads CVLCGGYFIDATTIIECLHSFCKMCIVRYLETSKYCPICD. The Nuclear localization signal signature appears at 81-95; the sequence is KLVPGLFKNEMKRRR. Residues 234–320 form a disordered region; that stretch reads ITHPQEGLNN…ALNGSSTSSG (87 aa). A compositionally biased stretch (low complexity) spans 262–281; that stretch reads VPSTSSPLPSPSTLVQPSQP. Positions 285-304 are enriched in polar residues; the sequence is HISSPINGTTMTSPNRQFNF.

As to quaternary structure, component of a PRC1-like complex. Homodimer. Interacts with cbx2.

It is found in the nucleus. Component of a Polycomb group (PcG) multiprotein PRC1-like complex, a complex class required to maintain the transcriptionally repressive state of many genes, including Hox genes, throughout development. PcG PRC1 complex acts via chromatin remodeling and modification of histones; it mediates monoubiquitination of histone H2A 'Lys-119', rendering chromatin heritably changed in its expressibility. In the PRC1 complex, it is required to stimulate the E3 ubiquitin-protein ligase activity of rnf2. The protein is Polycomb complex protein BMI-1-A (bmi1a) of Danio rerio (Zebrafish).